Here is a 217-residue protein sequence, read N- to C-terminus: Large ribosomal subunit protein uL1 (217 aa).

Serine 2 is modified (N-acetylserine). At tyrosine 11 the chain carries Phosphotyrosine. N6-acetyllysine is present on residues lysine 91 and lysine 106. Lysine 118 bears the N6-acetyllysine; alternate mark. Residue lysine 118 forms a Glycyl lysine isopeptide (Lys-Gly) (interchain with G-Cter in SUMO1); alternate linkage. A Glycyl lysine isopeptide (Lys-Gly) (interchain with G-Cter in SUMO2); alternate cross-link involves residue lysine 118. Residue lysine 161 forms a Glycyl lysine isopeptide (Lys-Gly) (interchain with G-Cter in SUMO2) linkage.

It belongs to the universal ribosomal protein uL1 family. In terms of assembly, component of the large ribosomal subunit.

It is found in the cytoplasm. In terms of biological role, component of the large ribosomal subunit. The ribosome is a large ribonucleoprotein complex responsible for the synthesis of proteins in the cell. The sequence is that of Large ribosomal subunit protein uL1 (RPL10A) from Bos taurus (Bovine).